The chain runs to 92 residues: YcgL domain-containing protein Sbal_1869 (92 aa).

Positions 1 to 85 constitute a YcgL domain; that stretch reads MLCAVYKSSR…PQVNLLAEHK (85 aa).

The sequence is that of YcgL domain-containing protein Sbal_1869 from Shewanella baltica (strain OS155 / ATCC BAA-1091).